Consider the following 249-residue polypeptide: Derlin-2.2 (249 aa).

Residues 1–21 are Cytoplasmic-facing; it reads MAQAVEEWYRQMPIITRSYLT. A helical membrane pass occupies residues 22–42; that stretch reads AAVVTTVGCTLEIISPYHLYL. At 43 to 96 the chain is on the lumenal side; sequence NPKLVVQHYEIWRLVTNFLYFRKMDLDFLFHMFFLARYCKLLEENSFRGRTADF. The chain crosses the membrane as a helical span at residues 97–117; it reads FYMLLFGATVLTGIVLIGGMI. The Cytoplasmic segment spans residues 118–122; the sequence is PYISE. The chain crosses the membrane as a helical span at residues 123–143; that stretch reads TFARILFLSNSLTFMMVYVWS. The Lumenal portion of the chain corresponds to 144-152; it reads KHNPFIHMS. Residues 153–173 form a helical membrane-spanning segment; it reads FLGLFTFTAAYLPWVLLGFSI. Residues 174-249 lie on the Cytoplasmic side of the membrane; that stretch reads LVGSSTWVDL…GAIGVDPQAQ (76 aa).

Belongs to the derlin family. As to expression, expressed in roots, stalks, leaves, immature ears, embryo and endosperm.

It is found in the endoplasmic reticulum membrane. Functionally, may be involved in the degradation process of specific misfolded endoplasmic reticulum (ER) luminal proteins. The chain is Derlin-2.2 (DER2.2) from Zea mays (Maize).